Here is a 418-residue protein sequence, read N- to C-terminus: UDP-N-acetylglucosamine 1-carboxyvinyltransferase (418 aa).

22–23 provides a ligand contact to phosphoenolpyruvate; that stretch reads KN. Arg-93 contacts UDP-N-acetyl-alpha-D-glucosamine. Catalysis depends on Cys-117, which acts as the Proton donor. Cys-117 is modified (2-(S-cysteinyl)pyruvic acid O-phosphothioketal). UDP-N-acetyl-alpha-D-glucosamine is bound by residues Asp-305 and Val-327.

The protein belongs to the EPSP synthase family. MurA subfamily.

It is found in the cytoplasm. It catalyses the reaction phosphoenolpyruvate + UDP-N-acetyl-alpha-D-glucosamine = UDP-N-acetyl-3-O-(1-carboxyvinyl)-alpha-D-glucosamine + phosphate. Its pathway is cell wall biogenesis; peptidoglycan biosynthesis. Functionally, cell wall formation. Adds enolpyruvyl to UDP-N-acetylglucosamine. This is UDP-N-acetylglucosamine 1-carboxyvinyltransferase from Alkalilimnicola ehrlichii (strain ATCC BAA-1101 / DSM 17681 / MLHE-1).